Reading from the N-terminus, the 994-residue chain is Myosin IA heavy chain (994 aa).

In terms of domain architecture, Myosin motor spans 12–720 (VGVEDLIMLT…PLFLLEDKRN (709 aa)). 105–112 (GESGAGKT) is a binding site for ATP. Residues 574-654 (TFIPTDKKRP…RAGYCYRQTF (81 aa)) are actin-binding. 2 IQ domains span residues 723–744 (LNDL…KWYL) and 745–774 (RTLA…QSIS). Residues 782–970 (RNRQSIKLSK…ANSPSFTAKA (189 aa)) enclose the TH1 domain.

Belongs to the TRAFAC class myosin-kinesin ATPase superfamily. Myosin family. As to quaternary structure, myosin I heavy chain is single-headed. Dimer of a heavy and a light chain. Inability to self-assemble into filaments.

Its function is as follows. Actin-based motor protein, possibly involved in a wide range of motile processes, such as cell movement across a surface, and extension and retraction of pseudopodia or lamellipodia. This is Myosin IA heavy chain (myoA) from Dictyostelium discoideum (Social amoeba).